We begin with the raw amino-acid sequence, 476 residues long: Bifunctional protein HldE (476 aa).

The ribokinase stretch occupies residues 1–319 (MKVSLPAFEK…EALALHHGES (319 aa)). 195–198 (NMSE) contacts ATP. Residue D264 is part of the active site. A cytidylyltransferase region spans residues 345-476 (MTNGCFDILH…AIIQNIMANQ (132 aa)).

In the N-terminal section; belongs to the carbohydrate kinase PfkB family. This sequence in the C-terminal section; belongs to the cytidylyltransferase family. Homodimer.

The catalysed reaction is D-glycero-beta-D-manno-heptose 7-phosphate + ATP = D-glycero-beta-D-manno-heptose 1,7-bisphosphate + ADP + H(+). The enzyme catalyses D-glycero-beta-D-manno-heptose 1-phosphate + ATP + H(+) = ADP-D-glycero-beta-D-manno-heptose + diphosphate. It participates in nucleotide-sugar biosynthesis; ADP-L-glycero-beta-D-manno-heptose biosynthesis; ADP-L-glycero-beta-D-manno-heptose from D-glycero-beta-D-manno-heptose 7-phosphate: step 1/4. It functions in the pathway nucleotide-sugar biosynthesis; ADP-L-glycero-beta-D-manno-heptose biosynthesis; ADP-L-glycero-beta-D-manno-heptose from D-glycero-beta-D-manno-heptose 7-phosphate: step 3/4. In terms of biological role, catalyzes the phosphorylation of D-glycero-D-manno-heptose 7-phosphate at the C-1 position to selectively form D-glycero-beta-D-manno-heptose-1,7-bisphosphate. Functionally, catalyzes the ADP transfer from ATP to D-glycero-beta-D-manno-heptose 1-phosphate, yielding ADP-D-glycero-beta-D-manno-heptose. The polypeptide is Bifunctional protein HldE (Shewanella putrefaciens (strain CN-32 / ATCC BAA-453)).